A 316-amino-acid polypeptide reads, in one-letter code: NADH-quinone oxidoreductase subunit H (316 aa).

The next 8 helical transmembrane spans lie at 6–26, 74–94, 98–118, 145–165, 177–197, 233–253, 256–276, and 296–316; these read PAVV…LIWV, FVIA…VVPF, VGVI…SLAV, ISYE…AGSF, GWYV…AVAE, YLGI…GWLG, FLPP…FFIL, and VMLP…LSVP.

Belongs to the complex I subunit 1 family. NDH-1 is composed of 14 different subunits. Subunits NuoA, H, J, K, L, M, N constitute the membrane sector of the complex.

It localises to the cell inner membrane. The catalysed reaction is a quinone + NADH + 5 H(+)(in) = a quinol + NAD(+) + 4 H(+)(out). NDH-1 shuttles electrons from NADH, via FMN and iron-sulfur (Fe-S) centers, to quinones in the respiratory chain. The immediate electron acceptor for the enzyme in this species is believed to be ubiquinone. Couples the redox reaction to proton translocation (for every two electrons transferred, four hydrogen ions are translocated across the cytoplasmic membrane), and thus conserves the redox energy in a proton gradient. This subunit may bind ubiquinone. This is NADH-quinone oxidoreductase subunit H from Methylococcus capsulatus (strain ATCC 33009 / NCIMB 11132 / Bath).